A 464-amino-acid polypeptide reads, in one-letter code: Fumarate hydratase class II (464 aa).

Residues 98 to 100 (SGT), 129 to 132 (HPND), 139 to 141 (SSN), and T187 each bind substrate. The active-site Proton donor/acceptor is H188. S318 is an active-site residue. Substrate-binding positions include S319 and 324–326 (KVN).

The protein belongs to the class-II fumarase/aspartase family. Fumarase subfamily. In terms of assembly, homotetramer.

Its subcellular location is the cytoplasm. It carries out the reaction (S)-malate = fumarate + H2O. The protein operates within carbohydrate metabolism; tricarboxylic acid cycle; (S)-malate from fumarate: step 1/1. Involved in the TCA cycle. Catalyzes the stereospecific interconversion of fumarate to L-malate. This is Fumarate hydratase class II from Wigglesworthia glossinidia brevipalpis.